The sequence spans 204 residues: High frequency lysogenization protein HflD homolog (204 aa).

This sequence belongs to the HflD family.

The protein resides in the cytoplasm. It is found in the cell inner membrane. This chain is High frequency lysogenization protein HflD homolog, found in Xanthomonas axonopodis pv. citri (strain 306).